A 251-amino-acid chain; its full sequence is Triosephosphate isomerase 1 (251 aa).

9–11 (NWK) contacts substrate. His-95 (electrophile) is an active-site residue. Glu-167 acts as the Proton acceptor in catalysis. Substrate contacts are provided by residues Gly-173, Ser-213, and 234–235 (GG).

The protein belongs to the triosephosphate isomerase family. Homodimer.

The protein localises to the cytoplasm. The enzyme catalyses D-glyceraldehyde 3-phosphate = dihydroxyacetone phosphate. Its pathway is carbohydrate biosynthesis; gluconeogenesis. It participates in carbohydrate degradation; glycolysis; D-glyceraldehyde 3-phosphate from glycerone phosphate: step 1/1. Its function is as follows. Involved in the gluconeogenesis. Catalyzes stereospecifically the conversion of dihydroxyacetone phosphate (DHAP) to D-glyceraldehyde-3-phosphate (G3P). In Listeria innocua serovar 6a (strain ATCC BAA-680 / CLIP 11262), this protein is Triosephosphate isomerase 1.